A 238-amino-acid polypeptide reads, in one-letter code: 4-hydroxy-tetrahydrodipicolinate reductase (238 aa).

Residue 12 to 17 (GASGRM) coordinates NAD(+). Arg-40 is an NADP(+) binding site. NAD(+)-binding positions include 93 to 95 (GTT) and 117 to 120 (ASNF). Residue His-149 is the Proton donor/acceptor of the active site. Residue His-150 coordinates (S)-2,3,4,5-tetrahydrodipicolinate. Catalysis depends on Lys-153, which acts as the Proton donor. Residue 159–160 (GT) coordinates (S)-2,3,4,5-tetrahydrodipicolinate.

Belongs to the DapB family.

The protein localises to the cytoplasm. It catalyses the reaction (S)-2,3,4,5-tetrahydrodipicolinate + NAD(+) + H2O = (2S,4S)-4-hydroxy-2,3,4,5-tetrahydrodipicolinate + NADH + H(+). The catalysed reaction is (S)-2,3,4,5-tetrahydrodipicolinate + NADP(+) + H2O = (2S,4S)-4-hydroxy-2,3,4,5-tetrahydrodipicolinate + NADPH + H(+). It participates in amino-acid biosynthesis; L-lysine biosynthesis via DAP pathway; (S)-tetrahydrodipicolinate from L-aspartate: step 4/4. In terms of biological role, catalyzes the conversion of 4-hydroxy-tetrahydrodipicolinate (HTPA) to tetrahydrodipicolinate. The sequence is that of 4-hydroxy-tetrahydrodipicolinate reductase from Xanthomonas euvesicatoria pv. vesicatoria (strain 85-10) (Xanthomonas campestris pv. vesicatoria).